The primary structure comprises 392 residues: Integrin-linked kinase-associated serine/threonine phosphatase 2C (392 aa).

N-acetylmethionine is present on methionine 1. Residues 1–91 are disordered; sequence MDLFGDLPEP…PEEEKNGGEE (91 aa). Over residues 56 to 70 the composition is skewed to polar residues; it reads SGNSGSLATSGSQVV. Positions 72 to 91 are enriched in basic and acidic residues; the sequence is TEGKGAKRKAPEEEKNGGEE. The PPM-type phosphatase domain occupies 108 to 390; sequence KGYVAERKGE…DNVTVMVVRI (283 aa). Mn(2+) contacts are provided by aspartate 152 and glycine 153. N6-acetyllysine is present on lysine 210. Residues aspartate 326 and aspartate 381 each coordinate Mn(2+).

Belongs to the PP2C family. As to quaternary structure, interacts with ILK. Mg(2+) serves as cofactor. The cofactor is Mn(2+).

The protein resides in the cytoplasm. The catalysed reaction is O-phospho-L-seryl-[protein] + H2O = L-seryl-[protein] + phosphate. It carries out the reaction O-phospho-L-threonyl-[protein] + H2O = L-threonyl-[protein] + phosphate. Its function is as follows. Protein phosphatase that may play a role in regulation of cell cycle progression via dephosphorylation of its substrates whose appropriate phosphorylation states might be crucial for cell proliferation. Selectively associates with integrin linked kinase (ILK), to modulate cell adhesion and growth factor signaling. Inhibits the ILK-GSK3B signaling axis and may play an important role in inhibiting oncogenic transformation. This is Integrin-linked kinase-associated serine/threonine phosphatase 2C (Ilkap) from Mus musculus (Mouse).